A 507-amino-acid chain; its full sequence is Keratin, type II cuticular Hb5 (507 aa).

The tract at residues 1–123 is head; that stretch reads MSCRSYRISP…PNAQCVKYEE (123 aa). The 312-residue stretch at 123 to 434 folds into the IF rod domain; it reads EKEQIKCLNS…RLLEGEEQRL (312 aa). Positions 124–158 are coil 1A; sequence KEQIKCLNSKFAAFIDKVRFLEQQNKLLETKWQFY. Positions 159–168 are linker 1; that stretch reads QNRKCCESNL. Residues 169-269 are coil 1B; that stretch reads EPLFGGYIEA…YEEEVCVLQA (101 aa). Residue lysine 229 forms a Glycyl lysine isopeptide (Lys-Gly) (interchain with G-Cter in SUMO1) linkage. Residues 270 to 286 form a linker 12 region; that stretch reads HISDTSVIVKMDNSRDL. Residues 287–430 are coil 2; it reads NMDCVVAEIK…ATYRRLLEGE (144 aa). Positions 431 to 507 are tail; that stretch reads EQRLCEGVGS…CGSSRSVRFA (77 aa).

It belongs to the intermediate filament family. As to quaternary structure, heterotetramer of two type I and two type II keratins.

This Mus musculus (Mouse) protein is Keratin, type II cuticular Hb5 (Krt85).